Reading from the N-terminus, the 148-residue chain is Large ribosomal subunit protein uL15 (148 aa).

Basic and acidic residues predominate over residues 1-10 (MQLHNLEYKK). Residues 1-42 (MQLHNLEYKKGSRNHKEKRVGRGHGSGLGKTSGRGQDGQKAR) form a disordered region. The segment covering 11-22 (GSRNHKEKRVGR) has biased composition (basic residues). A compositionally biased stretch (gly residues) spans 23–36 (GHGSGLGKTSGRGQ).

This sequence belongs to the universal ribosomal protein uL15 family. Part of the 50S ribosomal subunit.

Binds to the 23S rRNA. In Ureaplasma parvum serovar 3 (strain ATCC 27815 / 27 / NCTC 11736), this protein is Large ribosomal subunit protein uL15.